The primary structure comprises 430 residues: Glutamate-1-semialdehyde 2,1-aminomutase 2 (430 aa).

Lys269 is subject to N6-(pyridoxal phosphate)lysine.

This sequence belongs to the class-III pyridoxal-phosphate-dependent aminotransferase family. HemL subfamily. Homodimer. Pyridoxal 5'-phosphate is required as a cofactor.

The protein localises to the cytoplasm. The catalysed reaction is (S)-4-amino-5-oxopentanoate = 5-aminolevulinate. It participates in porphyrin-containing compound metabolism; protoporphyrin-IX biosynthesis; 5-aminolevulinate from L-glutamyl-tRNA(Glu): step 2/2. This is Glutamate-1-semialdehyde 2,1-aminomutase 2 from Lysinibacillus sphaericus (strain C3-41).